A 438-amino-acid polypeptide reads, in one-letter code: tRNA-2-methylthio-N(6)-dimethylallyladenosine synthase (438 aa).

One can recognise an MTTase N-terminal domain in the interval 2-118; that stretch reads KSFYLETFGC…LADMVRDAEL (117 aa). [4Fe-4S] cluster contacts are provided by Cys-11, Cys-47, Cys-81, Cys-157, Cys-161, and Cys-164. A Radical SAM core domain is found at 143 to 373; it reads PSAEVSRFVT…LALQEEITRQ (231 aa). One can recognise a TRAM domain in the interval 376-438; sequence QMDIGQVLPV…YRNSHLGERV (63 aa).

It belongs to the methylthiotransferase family. MiaB subfamily. Monomer. [4Fe-4S] cluster is required as a cofactor.

The protein resides in the cytoplasm. The enzyme catalyses N(6)-dimethylallyladenosine(37) in tRNA + (sulfur carrier)-SH + AH2 + 2 S-adenosyl-L-methionine = 2-methylsulfanyl-N(6)-dimethylallyladenosine(37) in tRNA + (sulfur carrier)-H + 5'-deoxyadenosine + L-methionine + A + S-adenosyl-L-homocysteine + 2 H(+). Catalyzes the methylthiolation of N6-(dimethylallyl)adenosine (i(6)A), leading to the formation of 2-methylthio-N6-(dimethylallyl)adenosine (ms(2)i(6)A) at position 37 in tRNAs that read codons beginning with uridine. In Syntrophotalea carbinolica (strain DSM 2380 / NBRC 103641 / GraBd1) (Pelobacter carbinolicus), this protein is tRNA-2-methylthio-N(6)-dimethylallyladenosine synthase.